Reading from the N-terminus, the 239-residue chain is Non-structural protein V (239 aa).

Disordered regions lie at residues 30–104 (PVET…ADEA) and 126–180 (NKSS…HRRE). Basic and acidic residues predominate over residues 65 to 74 (TPDRQDRSDK). Polar residues-rich tracts occupy residues 89–98 (PATSTDQPPT) and 143–153 (ASSTSDSTAGE). Zn(2+)-binding residues include H177, C196, C200, C212, C214, C217, C221, and C224.

In terms of assembly, interacts with host STAT1. Interacts with host TXNL1. Interacts (via C-terminus) with host CacyBP; this interaction inhibits host cell apoptosis.

The protein resides in the host cytoplasm. The protein localises to the host nucleus. Functionally, protects the virus against cell antiviral state by blocking host interferon signaling. Mechanistically, targets host phosphorylated STAT1 (phospho-STAT1) for degradation, thereby inhibiting the interferon alpha signaling pathway. Plays a role in the inhibition of host apoptosis. Interacts with and down-regulates the expression of host TXNL1. In turn, inhibits TXNL1-induced apoptosis through the BCL2-BAX-caspase 3 pathway. Inhibits host apoptosis also by negatively regulating host CacyBP/SIP. Promotes viral replication by activating the extracellular signal-regulated kinase (ERK) pathway. The polypeptide is Non-structural protein V (P/V) (Gallus gallus (Chicken)).